The primary structure comprises 125 residues: Large ribosomal subunit protein bL12 (125 aa).

It belongs to the bacterial ribosomal protein bL12 family. As to quaternary structure, homodimer. Part of the ribosomal stalk of the 50S ribosomal subunit. Forms a multimeric L10(L12)X complex, where L10 forms an elongated spine to which 2 to 4 L12 dimers bind in a sequential fashion. Binds GTP-bound translation factors.

Forms part of the ribosomal stalk which helps the ribosome interact with GTP-bound translation factors. Is thus essential for accurate translation. The protein is Large ribosomal subunit protein bL12 of Thioalkalivibrio sulfidiphilus (strain HL-EbGR7).